The primary structure comprises 264 residues: Thymidylate synthase (264 aa).

Residue R21 coordinates dUMP. H51 is a (6R)-5,10-methylene-5,6,7,8-tetrahydrofolate binding site. 126–127 (RR) serves as a coordination point for dUMP. C146 acts as the Nucleophile in catalysis. Residues 166–169 (RSAD), N177, and 207–209 (HLY) each bind dUMP. (6R)-5,10-methylene-5,6,7,8-tetrahydrofolate is bound at residue D169. A263 contacts (6R)-5,10-methylene-5,6,7,8-tetrahydrofolate.

This sequence belongs to the thymidylate synthase family. Bacterial-type ThyA subfamily. In terms of assembly, homodimer.

The protein localises to the cytoplasm. It catalyses the reaction dUMP + (6R)-5,10-methylene-5,6,7,8-tetrahydrofolate = 7,8-dihydrofolate + dTMP. Its pathway is pyrimidine metabolism; dTTP biosynthesis. Its function is as follows. Catalyzes the reductive methylation of 2'-deoxyuridine-5'-monophosphate (dUMP) to 2'-deoxythymidine-5'-monophosphate (dTMP) while utilizing 5,10-methylenetetrahydrofolate (mTHF) as the methyl donor and reductant in the reaction, yielding dihydrofolate (DHF) as a by-product. This enzymatic reaction provides an intracellular de novo source of dTMP, an essential precursor for DNA biosynthesis. The chain is Thymidylate synthase from Mesorhizobium japonicum (strain LMG 29417 / CECT 9101 / MAFF 303099) (Mesorhizobium loti (strain MAFF 303099)).